A 446-amino-acid polypeptide reads, in one-letter code: MAKKLFIETHGCQMNEYDSSRMADLLGEHQALEVTENAAEADVILLNTCSIREKAQEKVFSKLGMWRELKQQNPDLVIGVGGCVASQEGAAIRERAPYVDVVFGPQTLHRLPEMIDAARSTRKPQVDVSFPEIEKFDRLPEPRVDGPTAFVSVMEGCSKYCSFCVVPYTRGEEVSRPFDDVIAEVIHLAENGVREVTLLGQNVNGFRGLTHDGRLADFAELLRVVAAVDGIERIRYTTSHPLEFSDALIQAHAEVPELVKFIHLPVQSGSDRVLAAMKRNHTVLEYKSRIRKLKAAVPDICISSDFIVGFPGETEKDFEQTMKLVEDVGFDFSFSFIYSARPGTPAADLADDLPEEVKKQRLQILQSRIHQQGYEISRRMVGSTQRILVTDFSKKDPGMLQGRTENNRIVNFRCDNPRLIGQFAQVHIDDALPHSLRGTLIDSTLH.

The region spanning 3–120 (KKLFIETHGC…LPEMIDAARS (118 aa)) is the MTTase N-terminal domain. [4Fe-4S] cluster-binding residues include C12, C49, C83, C157, C161, and C164. One can recognise a Radical SAM core domain in the interval 143–375 (RVDGPTAFVS…QSRIHQQGYE (233 aa)). The TRAM domain maps to 378–442 (RRMVGSTQRI…PHSLRGTLID (65 aa)).

The protein belongs to the methylthiotransferase family. MiaB subfamily. In terms of assembly, monomer. The cofactor is [4Fe-4S] cluster.

It localises to the cytoplasm. It carries out the reaction N(6)-dimethylallyladenosine(37) in tRNA + (sulfur carrier)-SH + AH2 + 2 S-adenosyl-L-methionine = 2-methylsulfanyl-N(6)-dimethylallyladenosine(37) in tRNA + (sulfur carrier)-H + 5'-deoxyadenosine + L-methionine + A + S-adenosyl-L-homocysteine + 2 H(+). Functionally, catalyzes the methylthiolation of N6-(dimethylallyl)adenosine (i(6)A), leading to the formation of 2-methylthio-N6-(dimethylallyl)adenosine (ms(2)i(6)A) at position 37 in tRNAs that read codons beginning with uridine. This is tRNA-2-methylthio-N(6)-dimethylallyladenosine synthase from Pseudomonas aeruginosa (strain UCBPP-PA14).